The primary structure comprises 403 residues: Ribosomal RNA large subunit methyltransferase I (403 aa).

The PUA domain maps to 9 to 88 (YPRLILSKGR…ESIDIAFFTR (80 aa)).

This sequence belongs to the methyltransferase superfamily. RlmI family.

It localises to the cytoplasm. It catalyses the reaction cytidine(1962) in 23S rRNA + S-adenosyl-L-methionine = 5-methylcytidine(1962) in 23S rRNA + S-adenosyl-L-homocysteine + H(+). Its function is as follows. Specifically methylates the cytosine at position 1962 (m5C1962) of 23S rRNA. In Salmonella paratyphi C (strain RKS4594), this protein is Ribosomal RNA large subunit methyltransferase I.